Here is a 3184-residue protein sequence, read N- to C-terminus: Probable serine/threonine-protein kinase pats1 (3184 aa).

Positions 369–378 are enriched in pro residues; that stretch reads DPPPPPPSNS. Disordered stretches follow at residues 369–516 and 913–1013; these read DPPP…QIPP and SITR…TSIL. Over residues 379–415 the composition is skewed to low complexity; sequence SPPISKSTSNNNLNVSNYHNNNNNNNNSNSNLSNSGN. The span at 421 to 450 shows a compositional bias: polar residues; that stretch reads DFQSQNLVKSYNRENSGNSLNSMLHQTSLP. Residues 451-512 are compositionally biased toward low complexity; it reads NNNNSNVVNN…NNNNSNNNNS (62 aa). One can recognise a Myotubularin phosphatase domain in the interval 842–1348; it reads CFPDHSLLQE…FQDTMWNEYF (507 aa). Residues 913-934 show a composition bias toward polar residues; the sequence is SITRATSPEDQNNGSSNYLLTP. The segment covering 935–993 has biased composition (low complexity); that stretch reads NSPNSSSSNLANNNNSNNNNINNNNNNNNNNNNNNNNNSNNNNNNNNNNNNNNNNNNNN. The segment covering 1000-1013 has biased composition (polar residues); it reads SRSTTIDNGQTSIL. 13 LRR repeats span residues 1391-1412, 1416-1438, 1439-1460, 1467-1488, 1491-1512, 1514-1535, 1541-1563, 1564-1585, 1587-1608, 1610-1631, 1633-1654, 1656-1678, and 1680-1701; these read FLETLDLSNLRLYYLPSESTLY, GLRELNLSKNNLNSISCSLSSLV, KLEKLSFEENSITNLPIETVVL, SLTELNLSSNQLIDLPIEFSMF, SLKKLHLKNNRFSAIPEVLGML, NLIELDLSELDLSSSTNSGVGI, KLCILNLNQTRIVELPKEFGDLK, SLEKLYLDFNSLVTLPHSFRQL, NLEELSLSFNSMTELPREVCFL, NLKKLMIEGNQIQFLPNEISQL, KLMILNVCKNKLDSLPASIGQL, QLVSLNLNNNSQLVSLRPTMGLL, and NLVELKLDGTRLKTPPPEIVSL. The 195-residue stretch at 1716 to 1910 folds into the Roc domain; sequence GQEQCYKMKL…EKLEALVQSQ (195 aa). Residues 1716-1910 form a small GTPase-like region; that stretch reads GQEQCYKMKL…EKLEALVQSQ (195 aa). Residues 1729-1736, 1797-1801, and 1854-1857 contribute to the GTP site; these read GQENVGKT, DFAGQ, and THLD. One can recognise a COR domain in the interval 1918–2127; sequence PRSYMLLENL…KCYWKNGMIL (210 aa). Positions 2247-2519 constitute a Protein kinase domain; sequence LMIEELIGEG…RLIKIAEAMF (273 aa). Residues 2253 to 2261 and Lys2274 each bind ATP; that span reads IGEGGAALV. Catalysis depends on Asp2379, which acts as the Proton acceptor. Disordered regions lie at residues 2528–2609 and 2652–2671; these read YQQQ…TISH and NSINNSNSNNEQPLSPNSLL. The span at 2529–2555 shows a compositional bias: low complexity; that stretch reads QQQQQQQQQQQQSSPSKSSSTSPIIKS. Residues 2556–2576 show a composition bias toward polar residues; sequence LNLSTVSELGESSNQTPKQNI. 5 WD repeats span residues 2745–2785, 2790–2829, 2909–2947, 2949–2986, and 2990–3040; these read PNQG…KYIQ, ANKDKKRIHCLYPYMNTVWCGSADDSITIWDIDTYQKIKS, AHERAIHAMIQVDDHVWTASSDGTIKVWSSTCQSVHTIE, AHSSRIFTLELVGDFVWSGSWDTTIKIWSTKDYHLVSE, and KHKD…NSRS. Low complexity predominate over residues 3055-3126; that stretch reads GSSNSITNSN…NYYYSNNVNS (72 aa). The segment at 3055–3164 is disordered; sequence GSSNSITNSN…TPPGSKGLMQ (110 aa). A compositionally biased stretch (polar residues) spans 3141–3157; that stretch reads HEQTSPNSATPLSSTPP.

The protein belongs to the protein kinase superfamily. TKL Ser/Thr protein kinase family. ROCO subfamily.

It carries out the reaction L-seryl-[protein] + ATP = O-phospho-L-seryl-[protein] + ADP + H(+). It catalyses the reaction L-threonyl-[protein] + ATP = O-phospho-L-threonyl-[protein] + ADP + H(+). In terms of biological role, may act as a serine/threonine-protein kinase and guanine-nucleotide releasing factor. Essential regulator of cytokinesis involved in the binding to actomyosin cytoskeleton. The sequence is that of Probable serine/threonine-protein kinase pats1 (pats1) from Dictyostelium discoideum (Social amoeba).